The sequence spans 89 residues: Small ribosomal subunit protein uS17 (89 aa).

The protein belongs to the universal ribosomal protein uS17 family. In terms of assembly, part of the 30S ribosomal subunit.

One of the primary rRNA binding proteins, it binds specifically to the 5'-end of 16S ribosomal RNA. The sequence is that of Small ribosomal subunit protein uS17 from Xylella fastidiosa (strain M12).